The sequence spans 262 residues: Ribosomal RNA small subunit methyltransferase A (262 aa).

Residues I18, G43, E65, D91, and N110 each contribute to the S-adenosyl-L-methionine site.

It belongs to the class I-like SAM-binding methyltransferase superfamily. rRNA adenine N(6)-methyltransferase family. RsmA subfamily.

It is found in the cytoplasm. The catalysed reaction is adenosine(1518)/adenosine(1519) in 16S rRNA + 4 S-adenosyl-L-methionine = N(6)-dimethyladenosine(1518)/N(6)-dimethyladenosine(1519) in 16S rRNA + 4 S-adenosyl-L-homocysteine + 4 H(+). In terms of biological role, specifically dimethylates two adjacent adenosines (A1518 and A1519) in the loop of a conserved hairpin near the 3'-end of 16S rRNA in the 30S particle. May play a critical role in biogenesis of 30S subunits. The sequence is that of Ribosomal RNA small subunit methyltransferase A from Ehrlichia canis (strain Jake).